We begin with the raw amino-acid sequence, 99 residues long: Small ribosomal subunit protein bS20 (99 aa).

Positions 1–20 (MASAKPKKKNPRLASGRKRA) are enriched in basic residues. Residues 1–29 (MASAKPKKKNPRLASGRKRARQDVKLNAA) form a disordered region.

Belongs to the bacterial ribosomal protein bS20 family.

Its function is as follows. Binds directly to 16S ribosomal RNA. The protein is Small ribosomal subunit protein bS20 of Paracidovorax citrulli (strain AAC00-1) (Acidovorax citrulli).